Consider the following 142-residue polypeptide: Large ribosomal subunit protein uL22c (142 aa).

Belongs to the universal ribosomal protein uL22 family. As to quaternary structure, part of the 50S ribosomal subunit.

It localises to the plastid. It is found in the chloroplast. Functionally, this protein binds specifically to 23S rRNA. The globular domain of the protein is located near the polypeptide exit tunnel on the outside of the subunit, while an extended beta-hairpin is found that lines the wall of the exit tunnel in the center of the 70S ribosome. This is Large ribosomal subunit protein uL22c (rpl22) from Oenothera parviflora (Small-flowered evening primrose).